The sequence spans 253 residues: MRVIMAEVFNSWQGEGGSVEGSAFGRRQIFVRFAGCDLHCAWCDSREYIDASRVSSWRYEVKPFTGRFEYRPNPASVEEVVEAVLRLDTGDIHSISYTGGEPTLQVKPLMALMERMKELGFDNFLETHGGLPELIRDVAPLTDYASVDIKDESAKATEDWKGLVLREVESIRILKEAGAKTYAKLVVTSETKVENVQWYASLLKGLAPLVIQPREPIEVSQAKLMEFYREAARIMGRKNVGLSFQVHKYLNVL.

Substrate contacts are provided by residues 12–14 and Arg32; that span reads WQG. The 231-residue stretch at 23 to 253 folds into the Radical SAM core domain; sequence AFGRRQIFVR…FQVHKYLNVL (231 aa). [4Fe-4S] cluster contacts are provided by Cys36, Cys40, and Cys43. Position 45 (Ser45) interacts with Mg(2+). Thr98 contacts substrate. Position 100 (Gly100) interacts with S-adenosyl-L-methionine.

Belongs to the radical SAM superfamily. 7-carboxy-7-deazaguanine synthase family. Homodimer. The cofactor is [4Fe-4S] cluster. It depends on S-adenosyl-L-methionine as a cofactor. Mg(2+) is required as a cofactor.

It carries out the reaction 6-carboxy-5,6,7,8-tetrahydropterin + H(+) = 7-carboxy-7-deazaguanine + NH4(+). It functions in the pathway purine metabolism; 7-cyano-7-deazaguanine biosynthesis. In terms of biological role, catalyzes the complex heterocyclic radical-mediated conversion of 6-carboxy-5,6,7,8-tetrahydropterin (CPH4) to 7-carboxy-7-deazaguanine (CDG), a step common to the biosynthetic pathways of all 7-deazapurine-containing compounds. This Thermococcus kodakarensis (strain ATCC BAA-918 / JCM 12380 / KOD1) (Pyrococcus kodakaraensis (strain KOD1)) protein is 7-carboxy-7-deazaguanine synthase.